The sequence spans 58 residues: Small ribosomal subunit protein bS21 (58 aa).

Residues 35 to 58 (REHYEKPSVKKKKKSEAARKRKFK) form a disordered region. Basic residues predominate over residues 43 to 58 (VKKKKKSEAARKRKFK).

Belongs to the bacterial ribosomal protein bS21 family.

The chain is Small ribosomal subunit protein bS21 from Clostridium botulinum (strain Alaska E43 / Type E3).